The following is a 92-amino-acid chain: Putative pterin-4-alpha-carbinolamine dehydratase (92 aa).

This sequence belongs to the pterin-4-alpha-carbinolamine dehydratase family.

It carries out the reaction (4aS,6R)-4a-hydroxy-L-erythro-5,6,7,8-tetrahydrobiopterin = (6R)-L-erythro-6,7-dihydrobiopterin + H2O. This chain is Putative pterin-4-alpha-carbinolamine dehydratase, found in Cereibacter sphaeroides (strain ATCC 17023 / DSM 158 / JCM 6121 / CCUG 31486 / LMG 2827 / NBRC 12203 / NCIMB 8253 / ATH 2.4.1.) (Rhodobacter sphaeroides).